Reading from the N-terminus, the 1579-residue chain is Pentafunctional AROM polypeptide (1579 aa).

Residues 1 to 391 (MKVELSKVPI…YGTSAHVVSD (391 aa)) form a 3-dehydroquinate synthase region. Residues 44 to 46 (DTN), 79 to 82 (EAHK), 110 to 112 (GGV), and Asp-115 each bind NAD(+). A 7-phospho-2-dehydro-3-deoxy-D-arabino-heptonate-binding site is contributed by Arg-126. 135-136 (TS) is a binding site for NAD(+). The 7-phospho-2-dehydro-3-deoxy-D-arabino-heptonate site is built by Asp-142 and Lys-148. An NAD(+)-binding site is contributed by Lys-157. Residue Asn-158 coordinates 7-phospho-2-dehydro-3-deoxy-D-arabino-heptonate. Residues 175–178 (WLET) and Asn-186 each bind NAD(+). Glu-190 serves as a coordination point for Zn(2+). Residues 190–193 (EVIK) and Lys-257 contribute to the 7-phospho-2-dehydro-3-deoxy-D-arabino-heptonate site. The active-site Proton acceptor; for 3-dehydroquinate synthase activity is the Glu-267. Residues 271 to 275 (RNLLN) and His-278 each bind 7-phospho-2-dehydro-3-deoxy-D-arabino-heptonate. Zn(2+) is bound at residue His-278. The Proton acceptor; for 3-dehydroquinate synthase activity role is filled by His-282. Positions 294 and 363 each coordinate 7-phospho-2-dehydro-3-deoxy-D-arabino-heptonate. Zn(2+) is bound at residue His-294. An EPSP synthase region spans residues 404 to 862 (VYPFKTLENG…WDVLHTQLGA (459 aa)). The active-site For EPSP synthase activity is Cys-844. Positions 881–1070 (SIVIIGMRAA…IPTNRSSFVC (190 aa)) are shikimate kinase. 886-893 (GMRAAGKT) provides a ligand contact to ATP. The 3-dehydroquinase stretch occupies residues 1071–1283 (LTFDDLAAHK…SAPGQLTLSQ (213 aa)). The Proton acceptor; for 3-dehydroquinate dehydratase activity role is filled by His-1188. Lys-1217 functions as the Schiff-base intermediate with substrate; for 3-dehydroquinate dehydratase activity in the catalytic mechanism. A shikimate dehydrogenase region spans residues 1296–1579 (AKNFYVVGSP…IYSAVTEEQA (284 aa)).

This sequence in the N-terminal section; belongs to the sugar phosphate cyclases superfamily. Dehydroquinate synthase family. It in the 2nd section; belongs to the EPSP synthase family. In the 3rd section; belongs to the shikimate kinase family. The protein in the 4th section; belongs to the type-I 3-dehydroquinase family. This sequence in the C-terminal section; belongs to the shikimate dehydrogenase family. As to quaternary structure, homodimer. The cofactor is Zn(2+).

It localises to the cytoplasm. It carries out the reaction 7-phospho-2-dehydro-3-deoxy-D-arabino-heptonate = 3-dehydroquinate + phosphate. It catalyses the reaction 3-dehydroquinate = 3-dehydroshikimate + H2O. The enzyme catalyses shikimate + NADP(+) = 3-dehydroshikimate + NADPH + H(+). The catalysed reaction is shikimate + ATP = 3-phosphoshikimate + ADP + H(+). It carries out the reaction 3-phosphoshikimate + phosphoenolpyruvate = 5-O-(1-carboxyvinyl)-3-phosphoshikimate + phosphate. The protein operates within metabolic intermediate biosynthesis; chorismate biosynthesis; chorismate from D-erythrose 4-phosphate and phosphoenolpyruvate: step 2/7. It participates in metabolic intermediate biosynthesis; chorismate biosynthesis; chorismate from D-erythrose 4-phosphate and phosphoenolpyruvate: step 3/7. Its pathway is metabolic intermediate biosynthesis; chorismate biosynthesis; chorismate from D-erythrose 4-phosphate and phosphoenolpyruvate: step 4/7. It functions in the pathway metabolic intermediate biosynthesis; chorismate biosynthesis; chorismate from D-erythrose 4-phosphate and phosphoenolpyruvate: step 5/7. The protein operates within metabolic intermediate biosynthesis; chorismate biosynthesis; chorismate from D-erythrose 4-phosphate and phosphoenolpyruvate: step 6/7. Functionally, the AROM polypeptide catalyzes 5 consecutive enzymatic reactions in prechorismate polyaromatic amino acid biosynthesis. In Lachancea thermotolerans (strain ATCC 56472 / CBS 6340 / NRRL Y-8284) (Yeast), this protein is Pentafunctional AROM polypeptide.